The sequence spans 316 residues: N-acetyl-gamma-glutamyl-phosphate reductase (316 aa).

C136 is a catalytic residue.

It belongs to the NAGSA dehydrogenase family. Type 1 subfamily.

It localises to the cytoplasm. The catalysed reaction is N-acetyl-L-glutamate 5-semialdehyde + phosphate + NADP(+) = N-acetyl-L-glutamyl 5-phosphate + NADPH + H(+). The protein operates within amino-acid biosynthesis; L-arginine biosynthesis; N(2)-acetyl-L-ornithine from L-glutamate: step 3/4. Its function is as follows. Catalyzes the NADPH-dependent reduction of N-acetyl-5-glutamyl phosphate to yield N-acetyl-L-glutamate 5-semialdehyde. The polypeptide is N-acetyl-gamma-glutamyl-phosphate reductase (Xanthomonas campestris pv. campestris (strain ATCC 33913 / DSM 3586 / NCPPB 528 / LMG 568 / P 25)).